A 573-amino-acid chain; its full sequence is ATP-dependent RNA helicase RhlB (573 aa).

Positions 9–37 match the Q motif motif; that stretch reads VTFSSFDLHPALIAGLESAGFTRCTPIQA. A Helicase ATP-binding domain is found at 40 to 220; it reads LPVALPGGDV…YEHMNEPEKL (181 aa). 53-60 provides a ligand contact to ATP; it reads AQTGTGKT. Positions 166-169 match the DEAD box motif; the sequence is DEAD. The Helicase C-terminal domain occupies 231–393; the sequence is RVRQRIYFPS…PVTSELLTPL (163 aa). Positions 391-560 are disordered; sequence TPLPRAPRVP…KPSGSPSLLS (170 aa). The span at 402–411 shows a compositional bias: acidic residues; that stretch reads EGEEADDDAG. Residues 419–432 are compositionally biased toward basic and acidic residues; that stretch reads REAREQRAAEEQRR. A compositionally biased stretch (gly residues) spans 435-450; that stretch reads GRSGSGGSRSGSGGGG. A compositionally biased stretch (basic and acidic residues) spans 451–462; sequence GRREGAGADGKP. Over residues 484–499 the composition is skewed to low complexity; the sequence is PVVAAAAGQAPSAGVA. Residues 505–514 are compositionally biased toward basic residues; sequence PRKRRRRRNG. Low complexity predominate over residues 541–560; the sequence is VVAKPVRAAAKPSGSPSLLS.

It belongs to the DEAD box helicase family. RhlB subfamily. As to quaternary structure, component of the RNA degradosome, which is a multiprotein complex involved in RNA processing and mRNA degradation.

It is found in the cytoplasm. The catalysed reaction is ATP + H2O = ADP + phosphate + H(+). Its function is as follows. DEAD-box RNA helicase involved in RNA degradation. Has RNA-dependent ATPase activity and unwinds double-stranded RNA. The sequence is that of ATP-dependent RNA helicase RhlB from Xanthomonas euvesicatoria pv. vesicatoria (strain 85-10) (Xanthomonas campestris pv. vesicatoria).